Reading from the N-terminus, the 1396-residue chain is Integrin alpha-PS2 (1396 aa).

Residues 1-31 form the signal peptide; it reads MSGDSIHRRRMALHCPITSLILLLIAMSAHG. Residues 32-1341 lie on the Extracellular side of the membrane; sequence YNIDLPSYVR…EPEPLQVPDV (1310 aa). 7 FG-GAP repeats span residues 36-106, 117-174, 186-239, 266-317, 318-383, 386-445, and 452-514; these read LPSY…DCKL, NVDK…FTSH, RTNN…FPFK, STSE…RWNM, ANIF…TEEK, TTEH…GPLA, and KSEQ…FASN. Residue Asn69 is glycosylated (N-linked (GlcNAc...) asparagine). An N-linked (GlcNAc...) asparagine glycan is attached at Asn209. A glycan (N-linked (GlcNAc...) asparagine) is linked at Asn322. N-linked (GlcNAc...) asparagine glycosylation is found at Asn584, Asn598, Asn741, Asn783, Asn833, and Asn959. 2 disordered regions span residues 960–1107 and 1159–1246; these read STDA…LGTL and PGFQ…KPLQ. Positions 963–979 are enriched in basic and acidic residues; the sequence is AGDKLSPKQVEQRRQED. Positions 997-1006 are enriched in polar residues; sequence QAVQEPQVNQ. Residue Asn1005 is glycosylated (N-linked (GlcNAc...) asparagine). 2 stretches are compositionally biased toward low complexity: residues 1007 to 1021 and 1060 to 1071; these read TSFT…SSGS and QQQQQHQQLLLA. Positions 1082–1099 are enriched in polar residues; the sequence is VTFNDKSQFGGRNNNFHT. 2 stretches are compositionally biased toward low complexity: residues 1162-1182 and 1217-1226; these read QGQT…GYQT and SSSSSSSSSS. Residues Asn1299 and Asn1307 are each glycosylated (N-linked (GlcNAc...) asparagine). Residues 1342 to 1366 traverse the membrane as a helical segment; sequence VPLWVVVLAACAGALIFLLLVWLLY. Residues 1367–1396 lie on the Cytoplasmic side of the membrane; the sequence is KCGFFNRNRPTDHSQERQPLRNGYHGDEHL. The interval 1377–1396 is disordered; the sequence is TDHSQERQPLRNGYHGDEHL.

Belongs to the integrin alpha chain family. Heterodimer of an alpha and a beta subunit. The alpha subunit is composed of a heavy and a light chain linked by a disulfide bond. Alpha-PS2 associates with beta-PS. In terms of processing, the heavy-light chain cleavage site is either in 1230-1231, or 1233-1234, or 1243-1244. In ovaries, highly expressed in follicle cells. At syncytial blastoderm stage, expressed in the embryonic mesodermal precursors but not in the ectoderm. At embryonic stages 7 and 10, expression is restricted to the mesoderm. At stage 12, expressed in the gonadal sheath and the interstitial cells of the gonad. In stage 16 embryos, expressed in the somatic and visceral muscles where localizes to sites of attachment between adjacent muscles. In third larval instar wing imaginal disk, expressed in the ventral compartment and in a subset of adepithelial and peripodial cells (at protein level).

The protein resides in the apical cell membrane. Its subcellular location is the lateral cell membrane. It localises to the basal cell membrane. Alpha-PS2/beta-PS is a receptor for Tig, wb and Ten-m. Involved in the function and/or development of the olfactory system. In Drosophila melanogaster (Fruit fly), this protein is Integrin alpha-PS2 (if).